A 291-amino-acid polypeptide reads, in one-letter code: NAD kinase (291 aa).

The active-site Proton acceptor is the Asp72. NAD(+) contacts are provided by residues 72–73 (DG), 146–147 (ND), Arg157, Arg174, Asp176, 187–192 (TAYSLS), and Gln247.

This sequence belongs to the NAD kinase family. Requires a divalent metal cation as cofactor.

The protein resides in the cytoplasm. It carries out the reaction NAD(+) + ATP = ADP + NADP(+) + H(+). Its function is as follows. Involved in the regulation of the intracellular balance of NAD and NADP, and is a key enzyme in the biosynthesis of NADP. Catalyzes specifically the phosphorylation on 2'-hydroxyl of the adenosine moiety of NAD to yield NADP. This Hydrogenovibrio crunogenus (strain DSM 25203 / XCL-2) (Thiomicrospira crunogena) protein is NAD kinase.